We begin with the raw amino-acid sequence, 474 residues long: Peroxisome proliferator-activated receptor alpha (474 aa).

The nuclear receptor DNA-binding region spans 106–180 (NLECRVCSDK…VGMSHNAIRF (75 aa)). NR C4-type zinc fingers lie at residues 109 to 129 (CRVC…CEGC) and 146 to 168 (CERM…FEKC). Residues 245-472 (FVIHDMETLC…HPLLQEIYRD (228 aa)) form the NR LBD domain.

Belongs to the nuclear hormone receptor family. NR1 subfamily. As to quaternary structure, heterodimer with the retinoid X receptor. In terms of tissue distribution, ubiquitous.

The protein localises to the nucleus. Functionally, ligand-activated transcription factor. Key regulator of lipid metabolism. Activated by lipids. Receptor for peroxisome proliferators such as hypolipidemic drugs and fatty acids. Once activated by a ligand, the receptor binds to promoter elements of target genes. Regulates the peroxisomal beta-oxidation pathway of fatty acids. This chain is Peroxisome proliferator-activated receptor alpha (ppara), found in Xenopus laevis (African clawed frog).